Here is a 203-residue protein sequence, read N- to C-terminus: Peptidyl-tRNA hydrolase (203 aa).

Position 18 (Tyr18) interacts with tRNA. The Proton acceptor role is filled by His23. Residues Phe69, Asn71, and Asn117 each contribute to the tRNA site.

The protein belongs to the PTH family. Monomer.

It localises to the cytoplasm. It carries out the reaction an N-acyl-L-alpha-aminoacyl-tRNA + H2O = an N-acyl-L-amino acid + a tRNA + H(+). Hydrolyzes ribosome-free peptidyl-tRNAs (with 1 or more amino acids incorporated), which drop off the ribosome during protein synthesis, or as a result of ribosome stalling. In terms of biological role, catalyzes the release of premature peptidyl moieties from peptidyl-tRNA molecules trapped in stalled 50S ribosomal subunits, and thus maintains levels of free tRNAs and 50S ribosomes. This Prochlorococcus marinus subsp. pastoris (strain CCMP1986 / NIES-2087 / MED4) protein is Peptidyl-tRNA hydrolase.